We begin with the raw amino-acid sequence, 134 residues long: Ribonuclease VapC1 (134 aa).

The PINc domain maps to 3–132 (YMLDTNIIIY…RITDLQWQDW (130 aa)). Residues Asp-6 and Asp-99 each coordinate Mg(2+).

The protein belongs to the PINc/VapC protein family. Requires Mg(2+) as cofactor.

Toxic component of a type II toxin-antitoxin (TA) system. Acts as an RNase, its toxic effect is neutralized by VapB1 antitoxin. The protein is Ribonuclease VapC1 of Haemophilus influenzae (strain ATCC 51907 / DSM 11121 / KW20 / Rd).